We begin with the raw amino-acid sequence, 235 residues long: Putative homeobox-leucine zipper protein ATHB-51 (235 aa).

Positions 74-133 form a DNA-binding region, homeobox; the sequence is EMIKKKRLTSGQLASLERSFQEEIKLDSDRKVKLSRELGLQPRQIAVWFQNRRARWKAKQ. The segment at 134 to 162 is leucine-zipper; it reads LEQLYDSLRQEYDVVSREKQMLHDEVKKL.

This sequence belongs to the HD-ZIP homeobox family. Class I subfamily. In terms of tissue distribution, widely expressed.

It is found in the nucleus. Functionally, putative transcription factor. This chain is Putative homeobox-leucine zipper protein ATHB-51 (ATHB-51), found in Arabidopsis thaliana (Mouse-ear cress).